Here is a 319-residue protein sequence, read N- to C-terminus: ATP-dependent 6-phosphofructokinase (319 aa).

Gly-11 provides a ligand contact to ATP. Arg-21 to Arg-25 contacts ADP. ATP is bound by residues Arg-72–Cys-73 and Gly-102–Ser-105. Residue Asp-103 coordinates Mg(2+). Residue Thr-125 to Asp-127 coordinates substrate. The active-site Proton acceptor is Asp-127. An ADP-binding site is contributed by Arg-154. Residues Arg-162 and Met-169 to Arg-171 contribute to the substrate site. Residues Gly-185–Glu-187, Arg-211, and Lys-213–His-215 contribute to the ADP site. Substrate is bound by residues Glu-222, Arg-243, and His-249–Arg-252.

The protein belongs to the phosphofructokinase type A (PFKA) family. ATP-dependent PFK group I subfamily. Prokaryotic clade 'B1' sub-subfamily. Homotetramer. It depends on Mg(2+) as a cofactor.

The protein resides in the cytoplasm. It catalyses the reaction beta-D-fructose 6-phosphate + ATP = beta-D-fructose 1,6-bisphosphate + ADP + H(+). The protein operates within carbohydrate degradation; glycolysis; D-glyceraldehyde 3-phosphate and glycerone phosphate from D-glucose: step 3/4. Its activity is regulated as follows. Allosterically activated by ADP and other diphosphonucleosides, and allosterically inhibited by phosphoenolpyruvate. Catalyzes the phosphorylation of D-fructose 6-phosphate to fructose 1,6-bisphosphate by ATP, the first committing step of glycolysis. This chain is ATP-dependent 6-phosphofructokinase, found in Geobacillus sp. (strain WCH70).